The sequence spans 246 residues: tRNA (guanine-N(1)-)-methyltransferase (246 aa).

S-adenosyl-L-methionine-binding positions include Gly112 and 131–136 (IGDYVL).

It belongs to the RNA methyltransferase TrmD family. In terms of assembly, homodimer.

It is found in the cytoplasm. It catalyses the reaction guanosine(37) in tRNA + S-adenosyl-L-methionine = N(1)-methylguanosine(37) in tRNA + S-adenosyl-L-homocysteine + H(+). In terms of biological role, specifically methylates guanosine-37 in various tRNAs. This Thermosipho africanus (strain TCF52B) protein is tRNA (guanine-N(1)-)-methyltransferase.